A 107-amino-acid chain; its full sequence is U1-lycotoxin-Ls1a (107 aa).

The signal sequence occupies residues M1–S20. Residues E21–R41 constitute a propeptide that is removed on maturation. Disulfide bonds link C44/C59, C51/C68, C58/C86, and C70/C84.

The protein belongs to the neurotoxin 19 (CSTX) family. 04 (U1-Lctx) subfamily. In terms of tissue distribution, expressed by the venom gland.

Its subcellular location is the secreted. This is U1-lycotoxin-Ls1a from Lycosa singoriensis (Wolf spider).